A 240-amino-acid polypeptide reads, in one-letter code: ATP synthase subunit a (240 aa).

5 helical membrane-spanning segments follow: residues Leu21–Phe41, Ala83–Ile103, Asp116–Val136, Leu184–Ile204, and Leu207–Leu227.

The protein belongs to the ATPase A chain family. In terms of assembly, F-type ATPases have 2 components, CF(1) - the catalytic core - and CF(0) - the membrane proton channel. CF(1) has five subunits: alpha(3), beta(3), gamma(1), delta(1), epsilon(1). CF(0) has three main subunits: a(1), b(2) and c(9-12). The alpha and beta chains form an alternating ring which encloses part of the gamma chain. CF(1) is attached to CF(0) by a central stalk formed by the gamma and epsilon chains, while a peripheral stalk is formed by the delta and b chains.

The protein localises to the cell membrane. Functionally, key component of the proton channel; it plays a direct role in the translocation of protons across the membrane. This chain is ATP synthase subunit a, found in Macrococcus caseolyticus (strain JCSC5402) (Macrococcoides caseolyticum).